The primary structure comprises 202 residues: Endothelin-1 (202 aa).

A signal peptide spans 1–23 (MDYFSMMVSLLLVAFHGAPETAA). Residues 24 to 49 (SGTELSTGAENPGEKPPASAPWRPRR) form a disordered region. Positions 24-50 (SGTELSTGAENPGEKPPASAPWRPRRS) are excised as a propeptide. 2 cysteine pairs are disulfide-bonded: cysteine 53–cysteine 67 and cysteine 55–cysteine 63. The propeptide occupies 74–202 (VNTPGHIVPY…EQKVTHNRTH (129 aa)). Positions 110–124 (CQCTSPHDKKCWNFC) are endothelin-like.

It belongs to the endothelin/sarafotoxin family.

Its subcellular location is the secreted. Endothelins are endothelium-derived vasoconstrictor peptides. Probable ligand for G-protein coupled receptors EDNRA and EDNRB which activates PTK2B, BCAR1, BCAR3 and, GTPases RAP1 and RHOA cascade in glomerular mesangial cells. Also binds the DEAR/FBXW7-AS1 receptor. Promotes mesenteric arterial wall remodeling via activation of ROCK signaling and subsequent colocalization of NFATC3 with F-actin filaments. NFATC3 then translocates to the nucleus where it subsequently promotes the transcription of the smooth muscle hypertrophy and differentiation marker ACTA2. The polypeptide is Endothelin-1 (EDN1) (Oryctolagus cuniculus (Rabbit)).